The chain runs to 471 residues: Ribulose bisphosphate carboxylase large chain (471 aa).

An N6,N6,N6-trimethyllysine modification is found at K5. Substrate-binding residues include N114 and T164. K166 serves as the catalytic Proton acceptor. K168 is a binding site for substrate. Residues K192, D194, and E195 each contribute to the Mg(2+) site. Position 192 is an N6-carboxylysine (K192). The active-site Proton acceptor is the H285. Residues R286, H318, and S370 each coordinate substrate.

This sequence belongs to the RuBisCO large chain family. Type I subfamily. In terms of assembly, heterohexadecamer of 8 large chains and 8 small chains; disulfide-linked. The disulfide link is formed within the large subunit homodimers. It depends on Mg(2+) as a cofactor. Post-translationally, the disulfide bond which can form in the large chain dimeric partners within the hexadecamer appears to be associated with oxidative stress and protein turnover.

It is found in the plastid. Its subcellular location is the chloroplast. The catalysed reaction is 2 (2R)-3-phosphoglycerate + 2 H(+) = D-ribulose 1,5-bisphosphate + CO2 + H2O. It carries out the reaction D-ribulose 1,5-bisphosphate + O2 = 2-phosphoglycolate + (2R)-3-phosphoglycerate + 2 H(+). In terms of biological role, ruBisCO catalyzes two reactions: the carboxylation of D-ribulose 1,5-bisphosphate, the primary event in carbon dioxide fixation, as well as the oxidative fragmentation of the pentose substrate in the photorespiration process. Both reactions occur simultaneously and in competition at the same active site. This is Ribulose bisphosphate carboxylase large chain from Chiococca alba (West Indian milkberry).